A 140-amino-acid polypeptide reads, in one-letter code: Putative pre-16S rRNA nuclease (140 aa).

It belongs to the YqgF nuclease family.

The protein resides in the cytoplasm. Could be a nuclease involved in processing of the 5'-end of pre-16S rRNA. The sequence is that of Putative pre-16S rRNA nuclease from Aeromonas hydrophila subsp. hydrophila (strain ATCC 7966 / DSM 30187 / BCRC 13018 / CCUG 14551 / JCM 1027 / KCTC 2358 / NCIMB 9240 / NCTC 8049).